Consider the following 559-residue polypeptide: Potassium-transporting ATPase potassium-binding subunit (559 aa).

The next 13 membrane-spanning stretches (helical) occupy residues 5 to 25 (GFLL…PLGS), 27 to 47 (LARL…RILW), 63 to 83 (LLAL…LLFW), 132 to 152 (GLTV…FALI), 170 to 190 (LVRI…LFFI), 253 to 273 (LAQM…FGEA), 283 to 303 (LLWA…WAEV), 327 to 347 (FGVL…CGAV), 356 to 376 (ALGG…FGGV), 379 to 399 (GLYG…LMIG), 416 to 436 (MTAL…ALAM), 484 to 504 (LLAF…MAIA), and 524 to 544 (GALF…LTFI).

The protein belongs to the KdpA family. The system is composed of three essential subunits: KdpA, KdpB and KdpC.

The protein localises to the cell inner membrane. Part of the high-affinity ATP-driven potassium transport (or Kdp) system, which catalyzes the hydrolysis of ATP coupled with the electrogenic transport of potassium into the cytoplasm. This subunit binds the periplasmic potassium ions and delivers the ions to the membrane domain of KdpB through an intramembrane tunnel. The protein is Potassium-transporting ATPase potassium-binding subunit of Salmonella newport (strain SL254).